The following is a 341-amino-acid chain: UDP-N-acetylenolpyruvoylglucosamine reductase (341 aa).

Residues 15–185 (LAQSCADLVE…TAVGLRLVKR (171 aa)) form the FAD-binding PCMH-type domain. The active site involves Arg-161. The active-site Proton donor is the Ser-231. Residue Glu-327 is part of the active site.

This sequence belongs to the MurB family. FAD is required as a cofactor.

Its subcellular location is the cytoplasm. It carries out the reaction UDP-N-acetyl-alpha-D-muramate + NADP(+) = UDP-N-acetyl-3-O-(1-carboxyvinyl)-alpha-D-glucosamine + NADPH + H(+). It participates in cell wall biogenesis; peptidoglycan biosynthesis. Functionally, cell wall formation. This chain is UDP-N-acetylenolpyruvoylglucosamine reductase, found in Shewanella baltica (strain OS195).